An 81-amino-acid chain; its full sequence is Sulfur carrier protein TusA (81 aa).

Cys19 functions as the Cysteine persulfide intermediate in the catalytic mechanism.

This sequence belongs to the sulfur carrier protein TusA family.

The protein localises to the cytoplasm. Functionally, sulfur carrier protein which probably makes part of a sulfur-relay system. The polypeptide is Sulfur carrier protein TusA (Shewanella woodyi (strain ATCC 51908 / MS32)).